A 1055-amino-acid polypeptide reads, in one-letter code: Focal adhesion kinase 1 (1055 aa).

Positions 1 to 29 (MAAAYLDPNLNHTPSSSTKTHLGTGTERS) are disordered. At alanine 2 the chain carries N-acetylalanine. Tyrosine 5 is modified (phosphotyrosine). Polar residues predominate over residues 10-27 (LNHTPSSSTKTHLGTGTE). The residue at position 13 (threonine 13) is a Phosphothreonine. 2 positions are modified to phosphoserine: serine 29 and serine 54. The region spanning 35 to 355 (RVLKVFHYFE…GYCRLVNGAT (321 aa)) is the FERM domain. Residue lysine 152 forms a Glycyl lysine isopeptide (Lys-Gly) (interchain with G-Cter in SUMO) linkage. Phosphotyrosine; by autocatalysis is present on tyrosine 397. Tyrosine 407 bears the Phosphotyrosine mark. In terms of domain architecture, Protein kinase spans 422 to 680 (IELGRCIGEG…ELKAQLSTIL (259 aa)). Residues 428-434 (IGEGQFG), lysine 454, and 500-502 (ELC) each bind ATP. Aspartate 546 functions as the Proton acceptor in the catalytic mechanism. 2 positions are modified to phosphotyrosine: tyrosine 570 and tyrosine 576. At tyrosine 577 the chain carries Phosphotyrosine; by RET and SRC. Serine 580 is subject to Phosphoserine. Over residues 685–697 (VQQEERMRMESRR) the composition is skewed to basic and acidic residues. Disordered stretches follow at residues 685 to 734 (VQQE…PSPQ) and 837 to 923 (VRLS…LDRS). The segment at 707 to 1055 (GSDEAPPKPS…LKMLGQTRPH (349 aa)) is interaction with TGFB1I1. A Phosphoserine modification is found at serine 722. Residue serine 732 is modified to Phosphoserine; by CDK5. Positions 837–849 (VRLSRGSIDREDG) are enriched in basic and acidic residues. Serine 843 carries the post-translational modification Phosphoserine. Phosphotyrosine is present on tyrosine 861. Positions 869 to 880 (PAAPPKKPPRPG) are enriched in pro residues. Positions 886–896 (SNLSSISSPAE) are enriched in polar residues. Position 913 is a phosphoserine (serine 913). Residues 915-1055 (PPTANLDRSN…LKMLGQTRPH (141 aa)) form an interaction with ARHGEF28 region. Residue threonine 917 is modified to Phosphothreonine. A Phosphotyrosine modification is found at tyrosine 928.

It belongs to the protein kinase superfamily. Tyr protein kinase family. FAK subfamily. As to quaternary structure, interacts with GIT1. Component of a complex that contains at least FER, CTTN and PTK2/FAK1. Interacts with BMX. Interacts with STEAP4. Interacts with ZFYVE21. Interacts with ESR1. Interacts with PIK3R1 or PIK3R2. Interacts with FGR, FLT4 and RET. Interacts with EPHA2 in resting cells; activation of EPHA2 recruits PTPN11, leading to dephosphorylation of PTK2/FAK1 and dissociation of the complex. Interacts with EPHA1 (kinase activity-dependent). Interacts with P53/TP53. Interacts (via first Pro-rich region) with CAS family members (via SH3 domain), including BCAR1, BCAR3, and CASS4. Interacts with NEDD9 (via SH3 domain). Interacts with TGFB1I1. Interacts with SRC, GRB2 and GRB7. Interacts with ARHGEF28. Interacts with SHB. Part of a complex composed of THSD1, PTK2/FAK1, TLN1 and VCL. Interacts with PXN and TLN1. Interacts with SORBS1. Interacts with STAT1. Interacts with WASL. Interacts with ARHGAP26 and SHC1. Interacts with RB1CC1; this inhibits PTK2/FAK1 activity and activation of downstream signaling pathways. Interacts with ARHGEF7. Interacts with MDM2. Interacts with PIAS1. Interacts with DCC. Interacts with LPXN (via LD motif 3). Interacts with MISP. Interacts with EMP2; regulates PTK2 activation and localization. Interacts with DSCAM. Interacts with AMBRA1. Interacts (when tyrosine-phosphorylated) with tensin TNS1; the interaction is increased by phosphorylation of TNS1. Phosphorylated on tyrosine residues upon activation, e.g. upon integrin signaling. Tyr-397 is the major autophosphorylation site, but other kinases can also phosphorylate this residue. Phosphorylation at Tyr-397 promotes interaction with SRC and SRC family members, leading to phosphorylation at Tyr-576, Tyr-577 and at additional tyrosine residues. FGR promotes phosphorylation at Tyr-397 and Tyr-576. FER promotes phosphorylation at Tyr-577, Tyr-861 and Tyr-928, even when cells are not adherent. Tyr-397, Tyr-576 and Ser-722 are phosphorylated only when cells are adherent. Phosphorylation at Tyr-397 is important for interaction with BMX, PIK3R1 and SHC1. Phosphorylation at Tyr-928 is important for interaction with GRB2. Dephosphorylated by PTPN11; PTPN11 is recruited to PTK2 via EPHA2 (tyrosine phosphorylated). Microtubule-induced dephosphorylation at Tyr-397 is crucial for the induction of focal adhesion disassembly; this dephosphorylation could be catalyzed by PTPN11 and regulated by ZFYVE21. Phosphorylation on tyrosine residues is enhanced by NTN1. Post-translationally, sumoylated; this enhances autophosphorylation.

The protein resides in the cell junction. It is found in the focal adhesion. Its subcellular location is the cell membrane. It localises to the cytoplasm. The protein localises to the perinuclear region. The protein resides in the cell cortex. It is found in the cytoskeleton. Its subcellular location is the microtubule organizing center. It localises to the centrosome. The protein localises to the nucleus. The protein resides in the cilium basal body. The enzyme catalyses L-tyrosyl-[protein] + ATP = O-phospho-L-tyrosyl-[protein] + ADP + H(+). Its activity is regulated as follows. Subject to autoinhibition, mediated by interactions between the FERM domain and the kinase domain. Activated by autophosphorylation at Tyr-397. This promotes interaction with SRC and phosphorylation at Tyr-576 and Tyr-577 in the kinase activation loop by SRC. Phosphorylation at Tyr-397, Tyr-576 and Tyr-577 is required for maximal kinase activity. Non-receptor protein-tyrosine kinase that plays an essential role in regulating cell migration, adhesion, spreading, reorganization of the actin cytoskeleton, formation and disassembly of focal adhesions and cell protrusions, cell cycle progression, cell proliferation and apoptosis. Required for early embryonic development and placenta development. Required for embryonic angiogenesis, normal cardiomyocyte migration and proliferation, and normal heart development. Regulates axon growth and neuronal cell migration, axon branching and synapse formation; required for normal development of the nervous system. Plays a role in osteogenesis and differentiation of osteoblasts. Functions in integrin signal transduction, but also in signaling downstream of numerous growth factor receptors, G-protein coupled receptors (GPCR), EPHA2, netrin receptors and LDL receptors. Forms multisubunit signaling complexes with SRC and SRC family members upon activation; this leads to the phosphorylation of additional tyrosine residues, creating binding sites for scaffold proteins, effectors and substrates. Regulates numerous signaling pathways. Promotes activation of phosphatidylinositol 3-kinase and the AKT1 signaling cascade. Promotes activation of MAPK1/ERK2, MAPK3/ERK1 and the MAP kinase signaling cascade. Promotes localized and transient activation of guanine nucleotide exchange factors (GEFs) and GTPase-activating proteins (GAPs), and thereby modulates the activity of Rho family GTPases. Signaling via CAS family members mediates activation of RAC1. Phosphorylates NEDD9 following integrin stimulation. Recruits the ubiquitin ligase MDM2 to P53/TP53 in the nucleus, and thereby regulates P53/TP53 activity, P53/TP53 ubiquitination and proteasomal degradation. Phosphorylates SRC; this increases SRC kinase activity. Phosphorylates ACTN1, ARHGEF7, GRB7, RET and WASL. Promotes phosphorylation of PXN and STAT1; most likely PXN and STAT1 are phosphorylated by a SRC family kinase that is recruited to autophosphorylated PTK2/FAK1, rather than by PTK2/FAK1 itself. Promotes phosphorylation of BCAR1; GIT2 and SHC1; this requires both SRC and PTK2/FAK1. Promotes phosphorylation of BMX and PIK3R1. In terms of biological role, does not contain a kinase domain and inhibits PTK2/FAK1 phosphorylation and signaling. Its enhanced expression can attenuate the nuclear accumulation of LPXN and limit its ability to enhance serum response factor (SRF)-dependent gene transcription. The protein is Focal adhesion kinase 1 of Rattus norvegicus (Rat).